Consider the following 482-residue polypeptide: ATP synthase subunit beta (482 aa).

G162–T169 is a binding site for ATP.

This sequence belongs to the ATPase alpha/beta chains family. In terms of assembly, F-type ATPases have 2 components, CF(1) - the catalytic core - and CF(0) - the membrane proton channel. CF(1) has five subunits: alpha(3), beta(3), gamma(1), delta(1), epsilon(1). CF(0) has four main subunits: a(1), b(1), b'(1) and c(9-12).

The protein resides in the cellular thylakoid membrane. It carries out the reaction ATP + H2O + 4 H(+)(in) = ADP + phosphate + 5 H(+)(out). In terms of biological role, produces ATP from ADP in the presence of a proton gradient across the membrane. The catalytic sites are hosted primarily by the beta subunits. The sequence is that of ATP synthase subunit beta from Synechococcus sp. (strain PCC 6716).